Consider the following 325-residue polypeptide: Hydroxymethylglutaryl-CoA lyase, mitochondrial (325 aa).

A mitochondrion-targeting transit peptide spans 1–27 (MAAMRKAVPRRLVGLASLRAVSTSSMG). The Pyruvate carboxyltransferase domain occupies 33–300 (VKIVEVGPRD…HTGVNLQKLL (268 aa)). R41 contributes to the substrate binding site. Residue D42 participates in a divalent metal cation binding. K48 carries the N6-acetyllysine; alternate modification. N6-succinyllysine; alternate is present on K48. The residue at position 111 (K111) is an N6-acetyllysine. An N6-acetyllysine; alternate mark is found at K137 and K179. K137 and K179 each carry N6-succinyllysine; alternate. Positions 233 and 235 each coordinate a divalent metal cation. Residue C266 is part of the active site. N275 contributes to the a divalent metal cation binding site. A Microbody targeting signal motif is present at residues 323–325 (CKL). Position 324 is an N6-acetyllysine (K324).

It belongs to the HMG-CoA lyase family. In terms of assembly, homodimer; disulfide-linked. Can also form homotetramers.

The protein resides in the mitochondrion matrix. The protein localises to the peroxisome. It carries out the reaction (3S)-3-hydroxy-3-methylglutaryl-CoA = acetoacetate + acetyl-CoA. It functions in the pathway metabolic intermediate metabolism; (S)-3-hydroxy-3-methylglutaryl-CoA degradation; acetoacetate from (S)-3-hydroxy-3-methylglutaryl-CoA: step 1/1. Functionally, mitochondrial 3-hydroxy-3-methylglutaryl-CoA lyase that catalyzes a cation-dependent cleavage of (S)-3-hydroxy-3-methylglutaryl-CoA into acetyl-CoA and acetoacetate, a key step in ketogenesis. Terminal step in leucine catabolism. Ketone bodies (beta-hydroxybutyrate, acetoacetate and acetone) are essential as an alternative source of energy to glucose, as lipid precursors and as regulators of metabolism. The protein is Hydroxymethylglutaryl-CoA lyase, mitochondrial (HMGCL) of Pongo abelii (Sumatran orangutan).